The sequence spans 415 residues: Lupus La protein homolog (415 aa).

In terms of domain architecture, HTH La-type RNA-binding spans 7–99 (NEKMAALEAK…RRSPSRPLPE (93 aa)). Phosphoserine occurs at positions 92 and 94. The 77-residue stretch at 111–187 (RSVYIKGFPT…TNLLILFKED (77 aa)) folds into the RRM domain. The residue at position 116 (Lys-116) is an N6-acetyllysine. A Phosphothreonine modification is found at Thr-120. N6-acetyllysine is present on residues Lys-128 and Lys-327. Residues 226-343 (EGKMGCLLKF…HAARRFKGSH (118 aa)) form the xRRM domain. Residues 323–415 (ESLNKWKSKG…KKRENGARDK (93 aa)) form a disordered region. Basic residues predominate over residues 328–341 (WKSKGGHAARRFKG). Lys-356 is subject to N6-acetyllysine. A Phosphothreonine modification is found at Thr-377. The segment covering 377 to 415 (TRFDDDDHRRGPVKRGIDGRDREEPASKHKKRENGARDK) has biased composition (basic and acidic residues).

Interacts with DDX15. May interact with RUFY1. In terms of processing, phosphorylated.

The protein resides in the nucleus. Functionally, binds to the 3' poly(U) terminus of nascent RNA polymerase III transcripts, protecting them from exonuclease digestion and facilitating their folding and maturation. The protein is Lupus La protein homolog (Ssb) of Rattus norvegicus (Rat).